We begin with the raw amino-acid sequence, 828 residues long: Sarcolemmal membrane-associated protein (828 aa).

The interval 1–163 is necessary for targeting to centrosomes; that stretch reads MPSALAIFTC…AANTPSMYSQ (163 aa). The Cytoplasmic segment spans residues 1–802; sequence MPSALAIFTC…REKGNNKPWP (802 aa). The FHA domain occupies 28-85; that stretch reads IKIGRSVARCRPAQNNATFDCKVLSRNHALVWFDHKTGKFYLQDTKSSNGTFINSQRL. Ser148 carries the post-translational modification Phosphoserine. 2 coiled-coil regions span residues 167 to 202 and 230 to 388; these read QLSQ…ASDT and NQTE…QEKT. A helical; Anchor for type IV membrane protein transmembrane segment spans residues 339–359; it reads KKELQHKIDEMEEKEQELQAK. Residues 433–446 show a composition bias toward basic and acidic residues; sequence KLSKENQTRAKESD. The segment at 433 to 467 is disordered; that stretch reads KLSKENQTRAKESDFSDTLSPSKEKSSDDTTDAQM. A phosphoserine mark is found at Ser448 and Ser452. A coiled-coil region spans residues 477-799; sequence AKVSLLKDDL…KLLREKGNNK (323 aa). The helical; Anchor for type IV membrane protein transmembrane segment at 803-823 threads the bilayer; the sequence is WMPMLAALVAVTAIVLYVPGL. Topologically, residues 824 to 828 are extracellular; sequence ARASP.

This sequence belongs to the SLMAP family. In terms of assembly, homodimer. Interacts with myosin. Interacts with SIKE1 and both associate with the STRIPAK core complex composed of PP2A catalytic and scaffolding subunits, the striatins (PP2A regulatory subunits), the striatin-associated proteins MOB4, STRIP1 and STRIP2, PDCD10 and members of the STE20 kinases, such as STK24 and STK26. Interacts (via FHA domain) with STK3 (when phosphorylated); the interaction associates STK3 with the STRIPAK complex.

It localises to the cell membrane. It is found in the sarcolemma. The protein localises to the cytoplasm. Its subcellular location is the myofibril. The protein resides in the sarcomere. It localises to the m line. It is found in the z line. The protein localises to the cytoskeleton. Its subcellular location is the microtubule organizing center. The protein resides in the centrosome. It localises to the endoplasmic reticulum membrane. It is found in the mitochondrion membrane. In terms of biological role, associates with the striatin-interacting phosphatase and kinase (STRIPAK) core complex, forming the extended (SIKE1:SLMAP)STRIPAK complex. The (SIKE1:SLMAP)STRIPAK complex dephosphorylates STK3 leading to the inhibition of Hippo signaling and the control of cell growth. May play a role during myoblast fusion. The sequence is that of Sarcolemmal membrane-associated protein from Homo sapiens (Human).